We begin with the raw amino-acid sequence, 334 residues long: MKEIIEKLAKFENLSGVEMTDVIERIVTGRVTEAQIASLLLALKMKGETPEERTAIAQVMRGHAQHIPTEIHDAMDNCGTGGDKSFSFNISTTAAFVLAGGGIHMAKHGNRSISSKSGSADVLEALGINLDLKPAELGKVFDKTGIVFLFAKNMHPAMKYIMPARLELGIPTIMNLTGPLIHPMALETQLLGISRPELLESTAQVLKNMGRKRAIVVAGPEGLDEAGLNGTTKIALLENGEISLSSFTPEDLGMEDYAMEDIRGGNAQENAEILLSVLKNEASPFLETTVLNAGLGFYANGKIDSIKEGVALARQVIARGKALEKLRLLQEYQK.

Residues Gly79, 82 to 83 (GD), Ser87, 89 to 92 (NIST), 107 to 115 (KHGNRSISS), and Ser119 contribute to the 5-phospho-alpha-D-ribose 1-diphosphate site. Gly79 contacts anthranilate. Mg(2+) is bound at residue Ser91. Residue Asn110 coordinates anthranilate. Arg165 contacts anthranilate. Mg(2+)-binding residues include Asp224 and Glu225.

The protein belongs to the anthranilate phosphoribosyltransferase family. In terms of assembly, homodimer. Mg(2+) serves as cofactor.

It carries out the reaction N-(5-phospho-beta-D-ribosyl)anthranilate + diphosphate = 5-phospho-alpha-D-ribose 1-diphosphate + anthranilate. It functions in the pathway amino-acid biosynthesis; L-tryptophan biosynthesis; L-tryptophan from chorismate: step 2/5. Its function is as follows. Catalyzes the transfer of the phosphoribosyl group of 5-phosphorylribose-1-pyrophosphate (PRPP) to anthranilate to yield N-(5'-phosphoribosyl)-anthranilate (PRA). In Streptococcus pneumoniae (strain ATCC 700669 / Spain 23F-1), this protein is Anthranilate phosphoribosyltransferase.